Consider the following 75-residue polypeptide: Sec-independent protein translocase protein TatA (75 aa).

A helical transmembrane segment spans residues 1–21 (MGSFSIWHWLVVLAIVLLVFG). Positions 40–75 (KKGMRDEDKPNAQLGDESRSQDASRTAQDEHDRTPR) are disordered.

This sequence belongs to the TatA/E family. In terms of assembly, the Tat system comprises two distinct complexes: a TatABC complex, containing multiple copies of TatA, TatB and TatC subunits, and a separate TatA complex, containing only TatA subunits. Substrates initially bind to the TatABC complex, which probably triggers association of the separate TatA complex to form the active translocon.

It localises to the cell inner membrane. Functionally, part of the twin-arginine translocation (Tat) system that transports large folded proteins containing a characteristic twin-arginine motif in their signal peptide across membranes. TatA could form the protein-conducting channel of the Tat system. This chain is Sec-independent protein translocase protein TatA, found in Stenotrophomonas maltophilia (strain R551-3).